A 145-amino-acid polypeptide reads, in one-letter code: Ribonuclease P protein component (145 aa).

The disordered stretch occupies residues 121-145 (PAAAGTMPPARTVHPSSLSPTEPEL). The segment covering 134–145 (HPSSLSPTEPEL) has biased composition (polar residues).

The protein belongs to the RnpA family. In terms of assembly, consists of a catalytic RNA component (M1 or rnpB) and a protein subunit.

The catalysed reaction is Endonucleolytic cleavage of RNA, removing 5'-extranucleotides from tRNA precursor.. Functionally, RNaseP catalyzes the removal of the 5'-leader sequence from pre-tRNA to produce the mature 5'-terminus. It can also cleave other RNA substrates such as 4.5S RNA. The protein component plays an auxiliary but essential role in vivo by binding to the 5'-leader sequence and broadening the substrate specificity of the ribozyme. This Xanthomonas axonopodis pv. citri (strain 306) protein is Ribonuclease P protein component.